The primary structure comprises 786 residues: Polyribonucleotide nucleotidyltransferase (786 aa).

D516 and D522 together coordinate Mg(2+). Residues 582 to 641 (PRVTTVKIPVDKIGMVIGPKGQTINAIQDETGAEISIEDDGTIYVGATNGPSAQAAVERV) form the KH domain. The S1 motif domain maps to 653 to 722 (GDRFLGTVVK…QRGKIYLDKV (70 aa)). The segment at 722-786 (VRPEGAEGPA…SRPRRRTRHS (65 aa)) is disordered. The segment covering 727-738 (AEGPAEAAATDR) has biased composition (low complexity). A compositionally biased stretch (basic and acidic residues) spans 739 to 778 (PAGRDRGDRAPRDRGDRGDRERGSRGPDRGDGGEGGGESR).

The protein belongs to the polyribonucleotide nucleotidyltransferase family. Requires Mg(2+) as cofactor.

It localises to the cytoplasm. It carries out the reaction RNA(n+1) + phosphate = RNA(n) + a ribonucleoside 5'-diphosphate. In terms of biological role, involved in mRNA degradation. Catalyzes the phosphorolysis of single-stranded polyribonucleotides processively in the 3'- to 5'-direction. This chain is Polyribonucleotide nucleotidyltransferase, found in Salinispora arenicola (strain CNS-205).